Here is a 645-residue protein sequence, read N- to C-terminus: Heat shock protein SSA2 (645 aa).

An N-acetylserine modification is found at S2. A disordered region spans residues 581 to 645 (ANQTATQEEF…NDGPTVEEVD (65 aa)). Over residues 611-621 (AGATPSGAAGA) the composition is skewed to low complexity.

This sequence belongs to the heat shock protein 70 family. In terms of assembly, binds human histatin-5, an antifungal peptide from saliva.

It is found in the cytoplasm. Its subcellular location is the secreted. It localises to the cell wall. Functionally, heat shock protein that may play a role in the transport of polypeptides both across the mitochondrial membranes and into the endoplasmic reticulum. In terms of biological role, acts as a highly immunodominant antigen. Plays a role in the sensitivity to, and the import of candidacidal beta-defensin peptides. HSP70/SSA1 and SSA2 bind histatin-5, a peptide from human saliva, and mediates its fungicidal activity. SSA2 facilitates fungicidal activity of Hst 5 in binding and intracellular translocation, whereas HSP70/SSA1 appears to have a lesser functional role in Hst 5 toxicity. The sequence is that of Heat shock protein SSA2 from Candida albicans (strain SC5314 / ATCC MYA-2876) (Yeast).